The primary structure comprises 413 residues: Mitochondrial inner membrane magnesium transporter MFM1 (413 aa).

The N-terminal 35 residues, Met-1–Asp-35, are a transit peptide targeting the mitochondrion. Asn-202 carries an N-linked (GlcNAc...) asparagine glycan. Residues Leu-329–Leu-349 traverse the membrane as a helical segment. A YGMN motif is present at residues Tyr-353 to Asn-356. The chain crosses the membrane as a helical span at residues Ala-367–Ile-387.

Belongs to the CorA metal ion transporter (MIT) (TC 1.A.35) family. In terms of assembly, forms homooligomers. Interacts with MRS2. Post-translationally, N-glycosylated. Glycosylation is important for correct localization of the protein.

It localises to the mitochondrion inner membrane. Functionally, mitochondrial inner membrane magnesium transporter required for mitochondrial magnesium homeostasis. Modulates the conductance of the MRS2 channel. Involved in the splicing of mRNA group II introns in mitochondria by affecting mitochondrial magnesium concentrations, which are critical for group II intron splicing. The protein is Mitochondrial inner membrane magnesium transporter MFM1 (MFM1) of Saccharomyces cerevisiae (strain ATCC 204508 / S288c) (Baker's yeast).